Reading from the N-terminus, the 523-residue chain is 2-isopropylmalate synthase (523 aa).

One can recognise a Pyruvate carboxyltransferase domain in the interval 5 to 267 (VVIFDTTLRD…QTRINHNEIW (263 aa)). Positions 14, 202, 204, and 238 each coordinate Mn(2+). The regulatory domain stretch occupies residues 392-523 (RMDYFSVQSG…QNKENNKETV (132 aa)).

The protein belongs to the alpha-IPM synthase/homocitrate synthase family. LeuA type 1 subfamily. As to quaternary structure, homodimer. Requires Mn(2+) as cofactor.

The protein resides in the cytoplasm. It catalyses the reaction 3-methyl-2-oxobutanoate + acetyl-CoA + H2O = (2S)-2-isopropylmalate + CoA + H(+). It participates in amino-acid biosynthesis; L-leucine biosynthesis; L-leucine from 3-methyl-2-oxobutanoate: step 1/4. Functionally, catalyzes the condensation of the acetyl group of acetyl-CoA with 3-methyl-2-oxobutanoate (2-ketoisovalerate) to form 3-carboxy-3-hydroxy-4-methylpentanoate (2-isopropylmalate). This chain is 2-isopropylmalate synthase, found in Enterobacter sp. (strain 638).